A 747-amino-acid chain; its full sequence is Fatty acid oxidation complex subunit alpha (747 aa).

The tract at residues 1-197 is enoyl-CoA hydratase; that stretch reads MGASATNSVT…KMGLVDDVVP (197 aa). The interval 313 to 747 is 3-hydroxyacyl-CoA dehydrogenase; that stretch reads RAIHRVGVLG…NIDEVTDVAS (435 aa). The segment at 590–614 is disordered; it reads YLYSNPTKNSSPTKNGNSPAKRNSF. Residues 593–610 are compositionally biased toward polar residues; sequence SNPTKNSSPTKNGNSPAK.

This sequence in the N-terminal section; belongs to the enoyl-CoA hydratase/isomerase family. It in the central section; belongs to the 3-hydroxyacyl-CoA dehydrogenase family. Heterotetramer of two alpha chains (FadJ) and two beta chains (FadI).

The protein localises to the cytoplasm. It carries out the reaction a (3S)-3-hydroxyacyl-CoA = a (2E)-enoyl-CoA + H2O. The enzyme catalyses a 4-saturated-(3S)-3-hydroxyacyl-CoA = a (3E)-enoyl-CoA + H2O. The catalysed reaction is a (3S)-3-hydroxyacyl-CoA + NAD(+) = a 3-oxoacyl-CoA + NADH + H(+). It catalyses the reaction (3S)-3-hydroxybutanoyl-CoA = (3R)-3-hydroxybutanoyl-CoA. Its pathway is lipid metabolism; fatty acid beta-oxidation. Functionally, catalyzes the formation of a hydroxyacyl-CoA by addition of water on enoyl-CoA. Also exhibits 3-hydroxyacyl-CoA epimerase and 3-hydroxyacyl-CoA dehydrogenase activities. The polypeptide is Fatty acid oxidation complex subunit alpha (Yersinia pseudotuberculosis serotype O:1b (strain IP 31758)).